Reading from the N-terminus, the 251-residue chain is MSPDPKYSAYLLDIEGTLCPLSFVKDTLYPFFVLHVQRIVYENFNEEHPKDEFIAEQLAKYDIKEEGQAGKNKLVEHLLDLVANDTKDSTLKALQGHVWEVGYNSGELEVPLYPDVIDFLVRNDGRGDDKVPVYIYSSGSIHAQKLLFGHVKNSGNSHAKIAGNWDLNRFIDGYFDINTAGKKTESNSYKKILDEIKMTDKPHDVLFLSDNAKELDAAKECGISVGLAMRAGNVTVPNAIDYKQYFQFTKL.

2 residues coordinate Mg(2+): aspartate 13 and glutamate 15. Substrate is bound by residues 137–138 and lysine 183; that span reads SS. Residue aspartate 210 participates in Mg(2+) binding.

Belongs to the HAD-like hydrolase superfamily. MasA/MtnC family. As to quaternary structure, monomer. Requires Mg(2+) as cofactor.

It is found in the cytoplasm. It localises to the nucleus. It carries out the reaction 5-methylsulfanyl-2,3-dioxopentyl phosphate + H2O = 1,2-dihydroxy-5-(methylsulfanyl)pent-1-en-3-one + phosphate. Its pathway is amino-acid biosynthesis; L-methionine biosynthesis via salvage pathway; L-methionine from S-methyl-5-thio-alpha-D-ribose 1-phosphate: step 3/6. It functions in the pathway amino-acid biosynthesis; L-methionine biosynthesis via salvage pathway; L-methionine from S-methyl-5-thio-alpha-D-ribose 1-phosphate: step 4/6. Its function is as follows. Bifunctional enzyme that catalyzes the enolization of 2,3-diketo-5-methylthiopentyl-1-phosphate (DK-MTP-1-P) into the intermediate 2-hydroxy-3-keto-5-methylthiopentenyl-1-phosphate (HK-MTPenyl-1-P), which is then dephosphorylated to form the acireductone 1,2-dihydroxy-3-keto-5-methylthiopentene (DHK-MTPene). The protein is Enolase-phosphatase E1 of Candida glabrata (strain ATCC 2001 / BCRC 20586 / JCM 3761 / NBRC 0622 / NRRL Y-65 / CBS 138) (Yeast).